Reading from the N-terminus, the 270-residue chain is Putative pyruvate, phosphate dikinase regulatory protein (270 aa).

148–155 (GISRTSKT) lines the ADP pocket.

It belongs to the pyruvate, phosphate/water dikinase regulatory protein family. PDRP subfamily.

The catalysed reaction is N(tele)-phospho-L-histidyl/L-threonyl-[pyruvate, phosphate dikinase] + ADP = N(tele)-phospho-L-histidyl/O-phospho-L-threonyl-[pyruvate, phosphate dikinase] + AMP + H(+). It carries out the reaction N(tele)-phospho-L-histidyl/O-phospho-L-threonyl-[pyruvate, phosphate dikinase] + phosphate + H(+) = N(tele)-phospho-L-histidyl/L-threonyl-[pyruvate, phosphate dikinase] + diphosphate. In terms of biological role, bifunctional serine/threonine kinase and phosphorylase involved in the regulation of the pyruvate, phosphate dikinase (PPDK) by catalyzing its phosphorylation/dephosphorylation. In Bacillus cereus (strain 03BB102), this protein is Putative pyruvate, phosphate dikinase regulatory protein.